The chain runs to 173 residues: Crossover junction endodeoxyribonuclease RuvC (173 aa).

Catalysis depends on residues Asp8, Glu67, and Asp139. 3 residues coordinate Mg(2+): Asp8, Glu67, and Asp139.

Belongs to the RuvC family. As to quaternary structure, homodimer which binds Holliday junction (HJ) DNA. The HJ becomes 2-fold symmetrical on binding to RuvC with unstacked arms; it has a different conformation from HJ DNA in complex with RuvA. In the full resolvosome a probable DNA-RuvA(4)-RuvB(12)-RuvC(2) complex forms which resolves the HJ. The cofactor is Mg(2+).

The protein resides in the cytoplasm. The enzyme catalyses Endonucleolytic cleavage at a junction such as a reciprocal single-stranded crossover between two homologous DNA duplexes (Holliday junction).. In terms of biological role, the RuvA-RuvB-RuvC complex processes Holliday junction (HJ) DNA during genetic recombination and DNA repair. Endonuclease that resolves HJ intermediates. Cleaves cruciform DNA by making single-stranded nicks across the HJ at symmetrical positions within the homologous arms, yielding a 5'-phosphate and a 3'-hydroxyl group; requires a central core of homology in the junction. The consensus cleavage sequence is 5'-(A/T)TT(C/G)-3'. Cleavage occurs on the 3'-side of the TT dinucleotide at the point of strand exchange. HJ branch migration catalyzed by RuvA-RuvB allows RuvC to scan DNA until it finds its consensus sequence, where it cleaves and resolves the cruciform DNA. In Shewanella amazonensis (strain ATCC BAA-1098 / SB2B), this protein is Crossover junction endodeoxyribonuclease RuvC.